Here is a 488-residue protein sequence, read N- to C-terminus: UDP-N-acetylmuramate--L-alanine ligase (488 aa).

129-135 is an ATP binding site; the sequence is GSHGKTT.

Belongs to the MurCDEF family.

The protein resides in the cytoplasm. It carries out the reaction UDP-N-acetyl-alpha-D-muramate + L-alanine + ATP = UDP-N-acetyl-alpha-D-muramoyl-L-alanine + ADP + phosphate + H(+). The protein operates within cell wall biogenesis; peptidoglycan biosynthesis. Functionally, cell wall formation. This Prochlorococcus marinus (strain MIT 9313) protein is UDP-N-acetylmuramate--L-alanine ligase.